Here is a 328-residue protein sequence, read N- to C-terminus: MAIFEWRHRRRPFDGGGTRRRRFFSPLYSRNFKRTILFAVIFLAIFPPLYFHFKLRRIRQIVAQKCDWLHHPPLVCAHGGDSTLAFPNTMDAYSFAIRSRVDCIEVDVSRSSDGVLFALHNRDLQRIARNSSVQVGDLSMKQIKELDVSEIVKGTLGSSRIPTLEEALALISNSVRKVILDAKVGPPMYEKGLAQDILSIIERAQCNNCIVWAKSDTLARDIIRRAPDTMVGYIVMVDPLTGARNSLLRMKGARVVGVYHPLIDEELVRVVRRRNKEVYAWTVDDADPMKRMLHLGVDAVVTSDPSMFQGLMEDLRTECLEEGFSIRT.

A helical transmembrane segment spans residues 35–55 (TILFAVIFLAIFPPLYFHFKL). Residues 73–312 (PLVCAHGGDS…SDPSMFQGLM (240 aa)) form the GP-PDE domain.

Belongs to the glycerophosphoryl diester phosphodiesterase family. As to expression, expressed in rosette and cauline leaves.

It localises to the membrane. It catalyses the reaction a sn-glycero-3-phosphodiester + H2O = an alcohol + sn-glycerol 3-phosphate + H(+). The protein is Glycerophosphodiester phosphodiesterase GDPD4 of Arabidopsis thaliana (Mouse-ear cress).